The sequence spans 129 residues: Large ribosomal subunit protein uL22 (129 aa).

It belongs to the universal ribosomal protein uL22 family. As to quaternary structure, part of the 50S ribosomal subunit.

Functionally, this protein binds specifically to 23S rRNA; its binding is stimulated by other ribosomal proteins, e.g. L4, L17, and L20. It is important during the early stages of 50S assembly. It makes multiple contacts with different domains of the 23S rRNA in the assembled 50S subunit and ribosome. In terms of biological role, the globular domain of the protein is located near the polypeptide exit tunnel on the outside of the subunit, while an extended beta-hairpin is found that lines the wall of the exit tunnel in the center of the 70S ribosome. This chain is Large ribosomal subunit protein uL22, found in Rhizobium meliloti (strain 1021) (Ensifer meliloti).